We begin with the raw amino-acid sequence, 289 residues long: Protease HtpX homolog (289 aa).

The next 2 membrane-spanning stretches (helical) occupy residues 10 to 30 and 34 to 54; these read TAAL…VIGS and STTP…YGYW. His138 provides a ligand contact to Zn(2+). The active site involves Glu139. His142 lines the Zn(2+) pocket. The next 2 membrane-spanning stretches (helical) occupy residues 153 to 173 and 182 to 202; these read VAAA…IFGG and LAVM…QSAI. Glu207 serves as a coordination point for Zn(2+).

The protein belongs to the peptidase M48B family. Requires Zn(2+) as cofactor.

The protein resides in the cell membrane. This Arthrobacter sp. (strain FB24) protein is Protease HtpX homolog.